A 444-amino-acid chain; its full sequence is ATPase PAAT (444 aa).

A phosphoserine mark is found at serine 177, serine 182, serine 254, and serine 302. Residues 424–444 form a disordered region; it reads PSPGMPLRHYDSRERLSNGER. A compositionally biased stretch (basic and acidic residues) spans 431-444; the sequence is RHYDSRERLSNGER.

As to quaternary structure, homodimer. Interacts with ABCB7, ABCB8/MITOSUR and ABCB10.

Its subcellular location is the cytoplasm. It is found in the mitochondrion. It carries out the reaction ATP + H2O = ADP + phosphate + H(+). In terms of biological role, ATPase that regulates mitochondrial ABC transporters ABCB7, ABCB8/MITOSUR and ABCB10. Regulates mitochondrial ferric concentration and heme biosynthesis and plays a role in the maintenance of mitochondrial homeostasis and cell survival. The polypeptide is ATPase PAAT (Rattus norvegicus (Rat)).